The primary structure comprises 153 residues: MNVGVAHSEVNPNTRVMSSRGIWLAYVISVAALHVILLSIPFFSIPVVWTLTNVIHNLVMYLLLHTVKGTPFETPDQGKDRLLTHWEQIDYGMQCTSSRKFLSISPVVLYLLTSFYIKYDPAHFMINTASLLSVLLPKLPQFHGVRVFGINKY.

Over 1 to 21 (MNVGVAHSEVNPNTRVMSSRG) the chain is Cytoplasmic. Helical transmembrane passes span 22 to 42 (IWLA…SIPF) and 43 to 63 (FSIP…MYLL). The Cytoplasmic segment spans residues 64-105 (LHTVKGTPFETPDQGKDRLLTHWEQIDYGMQCTSSRKFLSIS). The helical transmembrane segment at 106 to 126 (PVVLYLLTSFYIKYDPAHFMI) threads the bilayer. The Extracellular portion of the chain corresponds to 127 to 153 (NTASLLSVLLPKLPQFHGVRVFGINKY).

This sequence belongs to the ORM family. As to quaternary structure, ceramide-sensitive subunit of the serine palmitoyltransferase (SPT) complex, which is also composed of SPTLC1, SPTLC2/3 and SPTSSA/B.

It localises to the endoplasmic reticulum membrane. Its function is as follows. Plays an essential role in the homeostatic regulation of sphingolipid de novo biosynthesis by modulating the activity of the serine palmitoyltransferase (SPT) in response to ceramide levels. When complexed to SPT, the binding of ceramides to its N-terminus stabilizes a conformation that block SPT substrate entry, hence preventing SPT catalytic activity. Through this mechanism, maintains ceramide levels at sufficient concentrations for the production of complex sphingolipids, but which prevents the accumulation of ceramides to levels that trigger apoptosis. This chain is ORM1-like protein 2 (ORMDL2), found in Gallus gallus (Chicken).